Reading from the N-terminus, the 183-residue chain is Isopentenyl-diphosphate Delta-isomerase (183 aa).

Residues His26 and His33 each contribute to the Mn(2+) site. The Nudix hydrolase domain maps to 31-169; the sequence is PLHFAFSCYV…PFAFSPWMVE (139 aa). The active site involves Cys68. Residue Cys68 coordinates Mg(2+). His70 is a Mn(2+) binding site. Glu88 is a binding site for Mg(2+). Glu118 and Glu120 together coordinate Mn(2+). Residue Glu120 is part of the active site.

The protein belongs to the IPP isomerase type 1 family. Mg(2+) is required as a cofactor. Requires Mn(2+) as cofactor.

It localises to the cytoplasm. The enzyme catalyses isopentenyl diphosphate = dimethylallyl diphosphate. Its pathway is isoprenoid biosynthesis; dimethylallyl diphosphate biosynthesis; dimethylallyl diphosphate from isopentenyl diphosphate: step 1/1. Its function is as follows. Catalyzes the 1,3-allylic rearrangement of the homoallylic substrate isopentenyl (IPP) to its highly electrophilic allylic isomer, dimethylallyl diphosphate (DMAPP). The chain is Isopentenyl-diphosphate Delta-isomerase from Corynebacterium diphtheriae (strain ATCC 700971 / NCTC 13129 / Biotype gravis).